A 357-amino-acid polypeptide reads, in one-letter code: 4-hydroxy-3-methylbut-2-en-1-yl diphosphate synthase (flavodoxin) (357 aa).

[4Fe-4S] cluster is bound by residues cysteine 265, cysteine 268, cysteine 300, and glutamate 307.

The protein belongs to the IspG family. In terms of assembly, homodimer. The cofactor is [4Fe-4S] cluster.

It catalyses the reaction (2E)-4-hydroxy-3-methylbut-2-enyl diphosphate + oxidized [flavodoxin] + H2O + 2 H(+) = 2-C-methyl-D-erythritol 2,4-cyclic diphosphate + reduced [flavodoxin]. It functions in the pathway isoprenoid biosynthesis; isopentenyl diphosphate biosynthesis via DXP pathway; isopentenyl diphosphate from 1-deoxy-D-xylulose 5-phosphate: step 5/6. Functionally, converts 2C-methyl-D-erythritol 2,4-cyclodiphosphate (ME-2,4cPP) into 1-hydroxy-2-methyl-2-(E)-butenyl 4-diphosphate. This Aquifex aeolicus (strain VF5) protein is 4-hydroxy-3-methylbut-2-en-1-yl diphosphate synthase (flavodoxin).